A 263-amino-acid chain; its full sequence is Tetraspanin-7 (263 aa).

At 1–7 (MVQCSNN) the chain is on the cytoplasmic side. Residues 8-28 (LLGILNFFTFLLSIPILSAGI) form a helical membrane-spanning segment. Over 29 to 45 (WLGKNAATECERFLDKP) the chain is Extracellular. A helical membrane pass occupies residues 46-66 (MVVLGIFLMFVSIAGLVGACC). The Cytoplasmic segment spans residues 67-75 (RVSCLLWLY). The helical transmembrane segment at 76–96 (LFAMFLLILLGFCFTIFAFAV) threads the bilayer. The Extracellular segment spans residues 97 to 234 (TNRGAGEVIS…NIKNSWKKVA (138 aa)). Asparagine 180 is a glycosylation site (N-linked (GlcNAc...) asparagine). Residues 235–255 (KVNIVFLIFLIIVYSVGCCAF) traverse the membrane as a helical segment. Residues 256–263 (RNNRKRSW) lie on the Cytoplasmic side of the membrane.

It belongs to the tetraspanin (TM4SF) family.

The protein resides in the membrane. In terms of biological role, may be involved in the regulation of cell differentiation. The chain is Tetraspanin-7 (TET7) from Arabidopsis thaliana (Mouse-ear cress).